We begin with the raw amino-acid sequence, 516 residues long: Cytochrome P450 monooxygenase lcsI (516 aa).

A helical membrane pass occupies residues 20 to 42; sequence ICVAAGCAFALSLLYLYVRALYL. N-linked (GlcNAc...) asparagine glycans are attached at residues Asn-131, Asn-184, Asn-415, Asn-420, and Asn-442. Residue Cys-456 participates in heme binding.

The protein belongs to the cytochrome P450 family. It depends on heme as a cofactor.

The protein resides in the membrane. Its pathway is secondary metabolite biosynthesis. Functionally, cytochrome P450 monooxygenase; part of the gene cluster that mediates the biosynthesis of the lipopeptide antibiotics leucinostatins that show extensive biological activities, including antimalarial, antiviral, antibacterial, antifungal, and antitumor activities, as well as phytotoxic. Leucinostatin A contains nine amino acid residues, including the unusual amino acid 4-methyl-L-proline (MePro), 2-amino-6-hydroxy-4-methyl-8-oxodecanoic acid (AHyMeOA), 3-hydroxyleucine (HyLeu), alpha-aminoisobutyric acid (AIB), beta-Ala, a 4-methylhex-2-enoic acid at the N-terminus as well as a N1,N1-dimethylpropane-1,2-diamine (DPD) at the C-terminus. The biosynthesis of leucinostatins is probably initiated with the assembly of 4-methylhex-2-enoic acid by a reducing PKS. Two reducing polyketide synthases, lcsB and lcsC, have been identified in the cluster and it is not clear which is the one that assembles 4-methylhex-2-enoic acid since both contain KS, AT, DH, cMT, ER, KR and ACP domains. The polyketide residue might be transferred to the NRPS lcsA, mediated by two additional enzymes, the acyl-CoA ligase lcsD and the thioesterase lcsE. The linear polyketide carboxylic acid, which is released from PKS, is converted to a CoA thioester by lcsD, and then lcsE hydrolyzes the thiol bond and shuttles the polyketide intermediate to lcsA. The C domain of the first module catalyzed the condensation of 4-methylhex-2-enoic acid and MePro carried by domain A1, followed by successive condensations of nine amino acids to trigger the elongation of the linear peptide. A5 and A6 domains of lcsA are proposed to incorporate leucine, A2 AHyMeOA, and A3 incorporates HyLeu. A4, A7 and A8 incorporate AIB. The AHyMeOA in leucinostatin A activated by the A2 might be produced by the second PKS (lcsB or lcsC) present within the cluster. The MePro is probably produced via leucine cyclization and may originate from a separate pathway, independent of the cluster. Another nonproteinogenic amino acid, beta-Ala, could be produced by an aspartic acid decarboxylase also localized outside of the cluster. Two candidates are VFPBJ_01400 and VFPBJ_10476. The final peptide scaffold may be released by the NAD(P)H-dependent thioester reductase (TE) at the C-terminal region of lcsA. Transamination of the lcsA product by the transaminase lcsP may produce DPD at the C-terminus. Further hydroxylation steps performed alternatively by the cytochrome P450 monooxygenases lcsI, lcsK and lcsN then yield the non-methylated leucinostatins precursor. It is also possible that leucines can be hydroxylated prior to their incorporation into the peptide. Varying extents of methylation then lead to the formation of leucinostatins A and B. The protein is Cytochrome P450 monooxygenase lcsI of Purpureocillium lilacinum (Paecilomyces lilacinus).